A 953-amino-acid chain; its full sequence is Coatomer subunit beta (953 aa).

The residue at position 2 (threonine 2) is an N-acetylthreonine. HEAT repeat units lie at residues 96-131 (HEMI…KEAE), 132-168 (LLEP…NFEN), 240-276 (SERA…SAPT), 277-314 (AIKA…HPAH), 316-353 (RVLQ…SRNV), and 396-433 (DMAA…RFDN). Lysine 494 bears the N6-acetyllysine mark.

Oligomeric complex that consists of at least the alpha, beta, beta', gamma, delta, epsilon and zeta subunits. Interacts with SCYL1. Interacts with CAPN8. Interacts with COPG1. Interacts with ARF1 (myristoylated); this interaction is required for binding of COPB1 to Golgi membranes. Interacts (via trunk domain) with ARF1 (via switch I region); the interaction is direct. Interacts with KCNK2 (via N-terminus); this interaction increases the channel-mediated whole cell currents and promotes plasma membrane expression of KCNK2. Interacts with PRKCE. Interacts with STX17. Interacts with TMEM115. Interacts with TMEM41B. Post-translationally, proteolytically cleaved between Ser-528 and Ser-529 by CAPN8.

It localises to the cytoplasm. The protein localises to the golgi apparatus membrane. It is found in the cytoplasmic vesicle. The protein resides in the COPI-coated vesicle membrane. Its subcellular location is the cell membrane. It localises to the endoplasmic reticulum-Golgi intermediate compartment. The protein localises to the microsome membrane. Functionally, the coatomer is a cytosolic protein complex that binds to dilysine motifs and reversibly associates with Golgi non-clathrin-coated vesicles, which further mediate biosynthetic protein transport from the ER, via the Golgi up to the trans Golgi network. Coatomer complex is required for budding from Golgi membranes, and is essential for the retrograde Golgi-to-ER transport of dilysine-tagged proteins. In mammals, the coatomer can only be recruited by membranes associated to ADP-ribosylation factors (ARFs), which are small GTP-binding proteins; the complex also influences the Golgi structural integrity, as well as the processing, activity, and endocytic recycling of LDL receptors. Involved in the Golgi disassembly and reassembly processes during cell cycle. Involved in autophagy by playing a role in early endosome function. Plays a role in organellar compartmentalization of secretory compartments including endoplasmic reticulum (ER)-Golgi intermediate compartment (ERGIC), Golgi, trans-Golgi network (TGN) and recycling endosomes, and in biosynthetic transport of CAV1. Plays a functional role in facilitating the transport of kappa-type opioid receptor mRNAs into axons and enhances translation of these proteins in the axonal compartment of dorsal root ganglion (DRG) cells. Required for limiting lipid storage in lipid droplets. Involved in lipid homeostasis by regulating the presence of perilipin family members PLIN2 and PLIN3 at the lipid droplet surface and promoting the association of adipocyte triglyceride lipase (PNPLA2) with the lipid droplet surface to mediate lipolysis. The chain is Coatomer subunit beta (Copb1) from Rattus norvegicus (Rat).